Consider the following 483-residue polypeptide: Krueppel-like factor 4 (483 aa).

Residues 22–42 form a disordered region; the sequence is TFASGPAGREKTLRPAGAPTN. Residue Lys32 forms a Glycyl lysine isopeptide (Lys-Gly) (interchain with G-Cter in ubiquitin) linkage. The 9aaTAD signature appears at 99–107; sequence DLLDLDFIL. Ser251 is modified (phosphoserine). Residues 294–395 are disordered; sequence AGPQLSNGHR…KRGRRSWPRK (102 aa). A compositionally biased stretch (pro residues) spans 338–356; the sequence is LPLPPGFHPHPGPNYPPFL. Residue Glu381 is modified to 5-glutamyl polyglutamate. Residues 386 to 395 show a composition bias toward basic residues; the sequence is KRGRRSWPRK. The interaction with ZNF296 stretch occupies residues 386 to 483; the sequence is KRGRRSWPRK…HLALHMKRHF (98 aa). 3 C2H2-type zinc fingers span residues 400 to 424, 430 to 454, and 460 to 482; these read HTCDYAGCGKTYTKSSHLKAHLRTH, YHCDWDGCGWKFARSDELTRHYRKH, and FQCQKCDRAFSRSDHLALHMKRH. Residues 443 to 474 form an interaction with target DNA region; it reads RSDELTRHYRKHTGHRPFQCQKCDRAFSRSDH.

Belongs to the krueppel C2H2-type zinc-finger protein family. As to quaternary structure, interacts with MUC1 (via the C-terminal domain). Interacts with POU5F1/OCT4 and SOX2. Interacts with MEIS2 isoform MeisD and PBX1 isoform PBX1a. Interacts with ZNF296. Interacts with GLIS1. Interacts with BTRC; this interaction leads to KLF4 ubiquitination and subsequent degradation. Interacts with IPO7; the interaction facilitates nuclear translocation of KLF4 in dental papilla cells. Ubiquitinated. 'Lys-48'-linked ubiquitinated and targeted for proteasomal degradation by the SCF(BTRC) E3 ubiquitin-protein ligase complex, thereby negatively regulating cell pluripotency maintenance and embryogenesis. Post-translationally, polyglutamylated by TTLL1 and TTLL4 at Glu-381, which inhibits KLF4 binding with E3 ligase component BTRC, thereby impeding ubiquitination. Deglutamylated by CCP1 and CCP6; deglutamylation promotes KLF4 ubiquitination. KLF4 glutamylation state plays a critical role in the regulation of its function in cell reprogramming, pluripotency maintenance and embryogenesis. Highest expression in the colon. Lower levels in testis, lung and small intestine.

It localises to the nucleus. It is found in the cytoplasm. Transcription factor; can act both as activator and as repressor. Binds the 5'-CACCC-3' core sequence. Binds to the promoter region of its own gene and can activate its own transcription. Regulates the expression of key transcription factors during embryonic development. Plays an important role in maintaining embryonic stem cells, and in preventing their differentiation. Required for establishing the barrier function of the skin and for postnatal maturation and maintenance of the ocular surface. Involved in the differentiation of epithelial cells and may also function in skeletal and kidney development. Contributes to the down-regulation of p53/TP53 transcription. The sequence is that of Krueppel-like factor 4 (Klf4) from Mus musculus (Mouse).